The following is a 237-amino-acid chain: Corrinoid adenosyltransferase MMAB (237 aa).

Residues 1–26 (MAVWLFGGRLGLRGRLSACRLLCPRF) constitute a mitochondrion transit peptide. Residues 30-49 (GPQGGEDGDRLQPSSTAAKI) form a disordered region. ATP-binding positions include 54 to 57 (TKTG), 62 to 63 (SS), and K72. S128 bears the Phosphoserine mark. 184 to 188 (RRAER) is a binding site for ATP. The residue at position 205 (K205) is an N6-succinyllysine. N208 is an ATP binding site. K224 is subject to N6-acetyllysine; alternate. K224 is subject to N6-succinyllysine; alternate.

Belongs to the Cob(I)alamin adenosyltransferase family. Homotrimer.

Its subcellular location is the mitochondrion. The enzyme catalyses cob(I)alamin-[corrinoid adenosyltransferase] + ATP = apo-[corrinoid adenosyltransferase] + adenosylcob(III)alamin + triphosphate. In terms of biological role, converts cob(I)alamin to adenosylcobalamin (adenosylcob(III)alamin), a coenzyme for methylmalonyl-CoA mutase, therefore participates in the final step of the vitamin B12 conversion. Generates adenosylcobalamin (AdoCbl) and directly delivers the cofactor to MUT in a transfer that is stimulated by ATP-binding to MMAB and gated by MMAA. This is Corrinoid adenosyltransferase MMAB from Mus musculus (Mouse).